The chain runs to 179 residues: Large ribosomal subunit protein uL5 (179 aa).

It belongs to the universal ribosomal protein uL5 family. Part of the 50S ribosomal subunit; part of the 5S rRNA/L5/L18/L25 subcomplex. Contacts the 5S rRNA and the P site tRNA. Forms a bridge to the 30S subunit in the 70S ribosome.

This is one of the proteins that bind and probably mediate the attachment of the 5S RNA into the large ribosomal subunit, where it forms part of the central protuberance. In the 70S ribosome it contacts protein S13 of the 30S subunit (bridge B1b), connecting the 2 subunits; this bridge is implicated in subunit movement. Contacts the P site tRNA; the 5S rRNA and some of its associated proteins might help stabilize positioning of ribosome-bound tRNAs. This chain is Large ribosomal subunit protein uL5, found in Carboxydothermus hydrogenoformans (strain ATCC BAA-161 / DSM 6008 / Z-2901).